The following is a 231-amino-acid chain: Quercetin 2,3-dioxygenase (231 aa).

The a divalent metal cation site is built by histidine 57, histidine 59, histidine 101, and glutamate 103.

The protein belongs to the pirin family. Requires Zn(2+) as cofactor. Co(2+) is required as a cofactor. The cofactor is Fe(2+).

The catalysed reaction is quercetin + O2 = 2-(3,4-dihydroxybenzoyloxy)-4,6-dihydroxybenzoate + CO. It functions in the pathway flavonoid metabolism; quercetin degradation. Its function is as follows. Has quercetin 2,3-dioxygenase activity in vitro. Its physiological role is unknown; however, may provide a mechanism that would avoid inhibition of key cellular proteins, such as DNA gyrase, by quercetin. The chain is Quercetin 2,3-dioxygenase (yhhW) from Escherichia coli O157:H7.